Consider the following 490-residue polypeptide: Cytochrome P450 90D2 (490 aa).

A helical membrane pass occupies residues 4–24 (AAAGWAAPAFAVAAVVIWVVL). Residue Cys-437 coordinates heme.

Belongs to the cytochrome P450 family. It depends on heme as a cofactor. In terms of tissue distribution, expressed at low levels leaf blades, shoot apex and elongating stem.

The protein localises to the membrane. It catalyses the reaction 6-deoxoteasterone + reduced [NADPH--hemoprotein reductase] + O2 = 3-dehydro-6-deoxoteasterone + oxidized [NADPH--hemoprotein reductase] + 2 H2O + H(+). It functions in the pathway plant hormone biosynthesis; brassinosteroid biosynthesis. Catalyzes the C6-oxidation step in brassinosteroids biosynthesis. May convert 6-deoxoteasterone (6-deoxoTE) to 3-dehydro-6-deoxoteasterone (6-deoxo3DT, 6-deoxo3DHT), and teasterone (TE) to 3-dehydroteasterone (3DT, 3-DHT). Involved in the elongation of leaf sheaths and stems. The protein is Cytochrome P450 90D2 of Oryza sativa subsp. japonica (Rice).